The following is a 339-amino-acid chain: 4-hydroxy-2-oxovalerate aldolase (339 aa).

The 251-residue stretch at 7 to 257 (IRIMDTTLRD…QVGVDLYKIM (251 aa)) folds into the Pyruvate carboxyltransferase domain. 15 to 16 (RD) provides a ligand contact to substrate. Asp-16 provides a ligand contact to Mn(2+). His-19 functions as the Proton acceptor in the catalytic mechanism. 2 residues coordinate substrate: Ser-169 and His-196. Positions 196 and 198 each coordinate Mn(2+). Position 286 (Tyr-286) interacts with substrate.

It belongs to the 4-hydroxy-2-oxovalerate aldolase family.

It carries out the reaction (S)-4-hydroxy-2-oxopentanoate = acetaldehyde + pyruvate. This chain is 4-hydroxy-2-oxovalerate aldolase, found in Pelotomaculum thermopropionicum (strain DSM 13744 / JCM 10971 / SI).